The chain runs to 1126 residues: [F-actin]-monooxygenase mical2 (1126 aa).

The monooxygenase domain stretch occupies residues 2-494 (GENGDDKHGR…KHLFITNELQ (493 aa)). Residues C97, 116–118 (EKR), 123–125 (RNN), F183, Y299, and D399 contribute to the FAD site. The Calponin-homology (CH) domain maps to 516 to 619 (DVRPNKLLIW…MVLYLSKFYE (104 aa)). The Nuclear localization signal signature appears at 659–680 (RKRVPKDEKTSDDSDLNKRRKT). Disordered regions lie at residues 748–830 (AVTA…SLSS) and 892–935 (PSLG…SGMS). The segment covering 792 to 803 (VRPPVQPRPGPA) has biased composition (pro residues). Over residues 805-824 (PTRELRVVERAQSHPDDLGR) the composition is skewed to basic and acidic residues. Positions 918 to 932 (SSSDSSPSSAPSRKS) are enriched in low complexity. The 63-residue stretch at 1001 to 1063 (DTCYFCKRRV…QPHFMHSVTK (63 aa)) folds into the LIM zinc-binding domain. Zn(2+)-binding residues include C1003, C1006, H1024, C1027, C1030, C1033, C1053, and H1056.

The protein belongs to the Mical family. Requires FAD as cofactor.

Its subcellular location is the nucleus. It localises to the cytoplasm. The catalysed reaction is L-methionyl-[F-actin] + NADPH + O2 + H(+) = L-methionyl-(R)-S-oxide-[F-actin] + NADP(+) + H2O. Nuclear monooxygenase that promotes depolymerization of F-actin by mediating oxidation of specific methionine residues on actin and regulates the srf signaling. Acts by modifying nuclear actin subunits through the addition of oxygen to form methionine-sulfoxide, leading to promote actin filament severing and prevent repolymerization. Acts as a key regulator of the srf signaling pathway elicited by nerve growth factor and serum: mediates oxidation and subsequent depolymerization of nuclear actin, leading to increase mkl1/mrtf-a presence in the nucleus and promote srf:mkl1/mrtf-a-dependent gene transcription. This is [F-actin]-monooxygenase mical2 from Xenopus tropicalis (Western clawed frog).